A 147-amino-acid polypeptide reads, in one-letter code: MTIFCELESGVDLPEYATEGASGADLRANIEEPIAVLPGQRVLVPTGIKMQIPQGYEVQVRPRSGLALKHGIMVVNSPGTIDADYRGEVCIILANFGESTFIIEPKMRVAQAVVAPVVQAKFIVVDQEEGLTTTSRGSRGFGHTGEK.

Residues 63 to 65, Asn-76, and 80 to 82 each bind substrate; these read RSG and TID.

The protein belongs to the dUTPase family. Mg(2+) is required as a cofactor.

It catalyses the reaction dUTP + H2O = dUMP + diphosphate + H(+). It participates in pyrimidine metabolism; dUMP biosynthesis; dUMP from dCTP (dUTP route): step 2/2. Its function is as follows. This enzyme is involved in nucleotide metabolism: it produces dUMP, the immediate precursor of thymidine nucleotides and it decreases the intracellular concentration of dUTP so that uracil cannot be incorporated into DNA. The protein is Deoxyuridine 5'-triphosphate nucleotidohydrolase of Chlamydia felis (strain Fe/C-56) (Chlamydophila felis).